The chain runs to 500 residues: Cytochrome P450 monooxygenase acrD (500 aa).

A helical transmembrane segment spans residues 13-32 (PYLSGTNLVWTLLLVGYIIP). N-linked (GlcNAc...) asparagine glycans are attached at residues Asn-210 and Asn-414. Position 447 (Cys-447) interacts with heme.

Belongs to the cytochrome P450 family. Requires heme as cofactor.

It localises to the membrane. The protein operates within secondary metabolite biosynthesis. Its function is as follows. Cytochrome P450 monooxygenase; part of the cluster that mediates the biosynthesis of acurin A, a highly reduced polyketide coupled to a serine via a peptide bond. The activities of the highly reducing polyketide synthase acrA and the nonribosomal peptide synthetase acrB are collectively responsible for the synthesis of the acurin A core structure with a heptaketide backbone produced by acrA covalently fused to a L-serine by acrB. After the formation of the PK-NRP hybrid product, it is detached from acrB by reductive release to set up the formation of the lactam ring by aldol condensation. The hydrolyase acrC then catalyzes water loss to generate a double bond in the ring. This double bond is probably reduced, which is followed by three oxidations at C-22 to generate the carboxylic acid moiety, involving probably the FAD-binding monooxygenase acrE and the cytochrome P450 monooxygenases acrD and acrF. Finally, a last methylation step performed by the O-methyltransferase acrG leads to the production of acurin A. The protein is Cytochrome P450 monooxygenase acrD of Aspergillus aculeatus (strain ATCC 16872 / CBS 172.66 / WB 5094).